The following is an 89-amino-acid chain: MSITAERRTALISEYKQSETDTGSPEVQVAILSERIVNLTEHLKTHKKDFHSRRGLLMMVGQRRSLLDYLKRKDQARYQSLIERLGLRR.

This sequence belongs to the universal ribosomal protein uS15 family. As to quaternary structure, part of the 30S ribosomal subunit. Forms a bridge to the 50S subunit in the 70S ribosome, contacting the 23S rRNA.

In terms of biological role, one of the primary rRNA binding proteins, it binds directly to 16S rRNA where it helps nucleate assembly of the platform of the 30S subunit by binding and bridging several RNA helices of the 16S rRNA. Forms an intersubunit bridge (bridge B4) with the 23S rRNA of the 50S subunit in the ribosome. This chain is Small ribosomal subunit protein uS15, found in Gluconobacter oxydans (strain 621H) (Gluconobacter suboxydans).